The sequence spans 255 residues: Hydroxyacylglutathione hydrolase (255 aa).

His-56, His-58, Asp-60, His-61, His-114, Asp-133, and His-171 together coordinate Zn(2+).

The protein belongs to the metallo-beta-lactamase superfamily. Glyoxalase II family. As to quaternary structure, monomer. Zn(2+) is required as a cofactor.

It catalyses the reaction an S-(2-hydroxyacyl)glutathione + H2O = a 2-hydroxy carboxylate + glutathione + H(+). The protein operates within secondary metabolite metabolism; methylglyoxal degradation; (R)-lactate from methylglyoxal: step 2/2. Its function is as follows. Thiolesterase that catalyzes the hydrolysis of S-D-lactoyl-glutathione to form glutathione and D-lactic acid. In Cereibacter sphaeroides (strain ATCC 17029 / ATH 2.4.9) (Rhodobacter sphaeroides), this protein is Hydroxyacylglutathione hydrolase.